Here is a 360-residue protein sequence, read N- to C-terminus: Alpha-N-acetyl-neuraminyl-2,3-beta-galactosyl-1,3-N-acetyl-galactosaminide alpha-2,6-sialyltransferase (360 aa).

The Cytoplasmic segment spans residues 1–71; it reads MEHVVTCWRL…PGRLLLLTLC (71 aa). The chain crosses the membrane as a helical; Signal-anchor for type II membrane protein span at residues 72–94; it reads ILTFSAVCVFLCCWACLPLCLAT. At 95-360 the chain is on the lumenal side; sequence CLDRHLPAAP…VFAHPSWRAK (266 aa). Residues cysteine 134 and cysteine 283 are joined by a disulfide bond. An N-linked (GlcNAc...) asparagine glycan is attached at asparagine 193.

This sequence belongs to the glycosyltransferase 29 family. As to expression, high expression in brain and colon and to a lesser extent in lung, heart, kidney, spleen and thymus.

The protein resides in the golgi apparatus membrane. It carries out the reaction an alpha-Neu5Ac-(2-&gt;3)-beta-D-Gal-(1-&gt;3)-D-GlcNAc derivative + CMP-N-acetyl-beta-neuraminate = an alpha-Neu5Ac-(2-&gt;3)-beta-D-Gal-(1-&gt;3)-[alpha-Neu5Ac-(2-&gt;6)]-D-GlcNAc derivative + CMP + H(+). It catalyses the reaction N-acetyl-alpha-neuraminosyl-(2-&gt;3)-beta-D-galactosyl-(1-&gt;3)-N-acetyl-D-galactosamine + CMP-N-acetyl-beta-neuraminate = N-acetyl-alpha-neuraminosyl-(2-&gt;3)-beta-D-galactosyl-(1-&gt;3)-[N-acetyl-alpha-neuraminosyl-(2-&gt;6)]-N-acetyl-D-galactosamine + CMP + H(+). The catalysed reaction is a ganglioside GM1b (d18:1(4E)) + CMP-N-acetyl-beta-neuraminate = a ganglioside GD1alpha (d18:1(4E)) + CMP + H(+). The enzyme catalyses 3-O-[alpha-Neu5Ac-(2-&gt;3)-beta-D-Gal-(1-&gt;3)-alpha-D-GalNAc]-L-Ser-[protein] + CMP-N-acetyl-beta-neuraminate = a 3-O-{alpha-Neu5Ac-(2-&gt;3)-beta-D-Gal-(1-&gt;3)-[alpha-Neu5Ac-(2-&gt;6)]-alpha-D-GalNAc}-L-seryl-[protein] + CMP + H(+). It carries out the reaction 3-O-[alpha-Neu5Ac-(2-&gt;3)-beta-D-Gal-(1-&gt;3)-alpha-D-GalNAc]-L-Thr-[protein] + CMP-N-acetyl-beta-neuraminate = a 3-O-{alpha-Neu5Ac-(2-&gt;3)-beta-D-Gal-(1-&gt;3)-[alpha-Neu5Ac-(2-&gt;6)]-alpha-D-GalNAc}-L-threonyl-[protein] + CMP + H(+). Its pathway is protein modification; protein glycosylation. It participates in glycolipid biosynthesis. Functionally, transfers the sialyl group (N-acetyl-alpha-neuraminyl or NeuAc) from CMP-NeuAc to the GalNAc residue on the NeuAc-alpha-2,3-Gal-beta-1,3-GalNAc sequence of glycoproteins and glycolipids forming an alpha-2,6-linkage. Produces branched type disialyl structures by transfer of a sialyl group onto a GalNAc residue inside the backbone core chains. Prefers O-glycans to glycoproteins or glycolipids. This Mus musculus (Mouse) protein is Alpha-N-acetyl-neuraminyl-2,3-beta-galactosyl-1,3-N-acetyl-galactosaminide alpha-2,6-sialyltransferase (St6galnac4).